The primary structure comprises 755 residues: MASVHESLYFNPMMTNGVVHANVFGIKDWVTPYKIAVLVLLNEMSRTGEGAVSLMERRRLNQLLLPLLQGPDITLSKLYKLIEESCPQLANSVQIRIKLMAEGELKDMEQFFDDLSDSFSGTEPEVHKTSVVGLFLRHMILAYSKLSFSQVFKLYTALQQYFQNGEKKTVEDADMELTSRDEGERKMEKEELDVSVREEEVSCSGPLSQKQAEFFLSQQASLLKNDETKALTPASLQKELNNLLKFNPDFAEAHYLSYLNNLRVQDVFSSTHSLLHYFDRLILTGAESKSNGEEGYGRSLRYAALNLAALHCRFGHYQQAELALQEAIRIAQESNDHVCLQHCLSWLYVLGQKRSDSYVLLEHSVKKAVHFGLPYLASLGIQSLVQQRAFAGKTANKLMDALKDSDLLHWKHSLSELIDISIAQKTAIWRLYGRSTMALQQAQMLLSMNSLEAVNAGVQQNNTESFAVALCHLAELHAEQGCFAAASEVLKHLKERFPPNSQHAQLWMLCDQKIQFDRAMNDGKYHLADSLVTGITALNSIEGVYRKAVVLQAQNQMSEAHKLLQKLLVHCQKLKNTEMVISVLLSVAELYWRSSSPTIALPMLLQALALSKEYRLQYLASETVLNLAFAQLILGIPEQALSLLHMAIEPILADGAILDKGRAMFLVAKCQVASAASYDQPKKAEALEAAIENLNEAKNYFAKVDCKERIRDVVYFQARLYHTLGKTQERNRCAMLFRQLHQELPSHGVPLINHL.

The residue at position 195 (Ser195) is a Phosphoserine. TPR repeat units lie at residues 209–249 (QKQA…FNPD), 250–300 (FAEA…GRSL), 301–337 (RYAA…SNDH), 338–378 (VCLQ…YLAS), 379–418 (LGIQ…SELI), 419–466 (DISI…TESF), 467–500 (AVAL…FPPN), 501–540 (SQHA…ALNS), 541–580 (IEGV…TEMV), 581–620 (ISVL…QYLA), 621–660 (SETV…ILDK), 661–696 (GRAM…NLNE), and 697–736 (AKNY…CAML). The residue at position 232 (Thr232) is a Phosphothreonine.

This sequence belongs to the APC5 family. The mammalian APC/C is composed at least of 14 distinct subunits ANAPC1, ANAPC2, CDC27/APC3, ANAPC4, ANAPC5, CDC16/APC6, ANAPC7, CDC23/APC8, ANAPC10, ANAPC11, CDC26/APC12, ANAPC13, ANAPC15 and ANAPC16 that assemble into a complex of at least 19 chains with a combined molecular mass of around 1.2 MDa; APC/C interacts with FZR1 and FBXO5.

Its subcellular location is the nucleus. It is found in the cytoplasm. The protein localises to the cytoskeleton. It localises to the spindle. It participates in protein modification; protein ubiquitination. In terms of biological role, component of the anaphase promoting complex/cyclosome (APC/C), a cell cycle-regulated E3 ubiquitin ligase that controls progression through mitosis and the G1 phase of the cell cycle. The APC/C complex acts by mediating ubiquitination and subsequent degradation of target proteins: it mainly mediates the formation of 'Lys-11'-linked polyubiquitin chains and, to a lower extent, the formation of 'Lys-48'- and 'Lys-63'-linked polyubiquitin chains. The APC/C complex catalyzes assembly of branched 'Lys-11'-/'Lys-48'-linked branched ubiquitin chains on target proteins. The protein is Anaphase-promoting complex subunit 5 (ANAPC5) of Homo sapiens (Human).